The primary structure comprises 212 residues: Peroxisomal membrane protein 4 (212 aa).

The next 2 helical transmembrane spans lie at 97–117 (GGTHQMHSFLAAFIGGLLLFG) and 151–171 (LKWDPFPLHTAVIWGLVLWLF). A glycan (N-linked (GlcNAc...) asparagine) is linked at asparagine 206.

The protein belongs to the peroxisomal membrane protein PXMP2/4 family. Interacts with PEX19. In terms of tissue distribution, liver.

It localises to the peroxisome membrane. This Rattus norvegicus (Rat) protein is Peroxisomal membrane protein 4 (Pxmp4).